The primary structure comprises 187 residues: EP300-interacting inhibitor of differentiation 1 (187 aa).

Residues 1–118 (MSEMAELSEL…YDYPEEEQLS (118 aa)) form a disordered region. Acidic residues-rich tracts occupy residues 52 to 63 (LEEEGPMEEEEA) and 93 to 116 (FESE…EEEQ). An interaction with NR0B2 region spans residues 54 to 120 (EEGPMEEEEA…YPEEEQLSGA (67 aa)). Residues 178-182 (LGCDE) carry the LXCXE motif motif.

As to quaternary structure, interacts via its LXCXE motif with the entire pocket region of RB1. Interacts with EP300, NR0B2 and TRIM27. Post-translationally, ubiquitinated in U2OS osteosarcoma cells and is rapidly degraded by proteasome as cells exit the cell cycle exit. As to expression, widely expressed. Most abundantly expressed in heart, skeletal muscle, pancreas, brain and testis. Expressed at much lower levels in placenta and peripheral blood leukocyte. Barely detectable in lung. Also weakly expressed in lung carcinoma A-549 and various leukemia cell lines.

It localises to the nucleus. It is found in the cytoplasm. Functionally, interacts with RB1 and EP300 and acts as a repressor of MYOD1 transactivation. Inhibits EP300 and CBP histone acetyltransferase activity. May be involved in coupling cell cycle exit to the transcriptional activation of genes required for cellular differentiation. May act as a candidate coinhibitory factor for NR0B2 that can be directly linked to transcription inhibitory mechanisms. The sequence is that of EP300-interacting inhibitor of differentiation 1 from Homo sapiens (Human).